The sequence spans 320 residues: Acetyl-coenzyme A carboxylase carboxyl transferase subunit alpha (320 aa).

Residues 39–293 enclose the CoA carboxyltransferase C-terminal domain; that stretch reads ALDAKAAKLL…RGAIAAMLKE (255 aa).

The protein belongs to the AccA family. Acetyl-CoA carboxylase is a heterohexamer composed of biotin carboxyl carrier protein (AccB), biotin carboxylase (AccC) and two subunits each of ACCase subunit alpha (AccA) and ACCase subunit beta (AccD).

Its subcellular location is the cytoplasm. It carries out the reaction N(6)-carboxybiotinyl-L-lysyl-[protein] + acetyl-CoA = N(6)-biotinyl-L-lysyl-[protein] + malonyl-CoA. It functions in the pathway lipid metabolism; malonyl-CoA biosynthesis; malonyl-CoA from acetyl-CoA: step 1/1. Component of the acetyl coenzyme A carboxylase (ACC) complex. First, biotin carboxylase catalyzes the carboxylation of biotin on its carrier protein (BCCP) and then the CO(2) group is transferred by the carboxyltransferase to acetyl-CoA to form malonyl-CoA. The chain is Acetyl-coenzyme A carboxylase carboxyl transferase subunit alpha from Ruegeria pomeroyi (strain ATCC 700808 / DSM 15171 / DSS-3) (Silicibacter pomeroyi).